The chain runs to 137 residues: MLQPKRTKFRKQFKGRIHGVAKGGTELNFGEFGLKAVEPERVTARQIEAARRALTRHMKRAGRVWIRVFPDVPVSAKPTEVRMGKGKGAPEYWAARIKPGRIMFEIDGVSVETAREALTLAAAKLPIKTRFIQRIAE.

This sequence belongs to the universal ribosomal protein uL16 family. Part of the 50S ribosomal subunit.

Functionally, binds 23S rRNA and is also seen to make contacts with the A and possibly P site tRNAs. This is Large ribosomal subunit protein uL16 from Xanthobacter autotrophicus (strain ATCC BAA-1158 / Py2).